The chain runs to 733 residues: Arginine decarboxylase 1A, chloroplastic (733 aa).

The N-terminal 44 residues, 1-44 (MPALGCCVDAAVSPPPGYSFLWDSSLPAPEIFPSGVPPSTNTAV), are a transit peptide targeting the chloroplast. N6-(pyridoxal phosphate)lysine is present on Lys157. Residues Ser309, Gly346, and 395-398 (ESGR) each bind pyridoxal 5'-phosphate. 460–461 (YA) is a substrate binding site. Cys548 (proton donor; shared with dimeric partner) is an active-site residue. Residue Asp549 coordinates substrate. Tyr592 contributes to the pyridoxal 5'-phosphate binding site.

The protein belongs to the Orn/Lys/Arg decarboxylase class-II family. SpeA subfamily. As to quaternary structure, interacts, via its C-terminal internal region, with the tobacco mosaic virus (TMV) replicase helicase region. Requires Mg(2+) as cofactor. Pyridoxal 5'-phosphate serves as cofactor.

The protein resides in the plastid. Its subcellular location is the chloroplast. It catalyses the reaction L-arginine + H(+) = agmatine + CO2. It functions in the pathway alkaloid biosynthesis; nicotine biosynthesis. Its pathway is amine and polyamine biosynthesis; agmatine biosynthesis; agmatine from L-arginine: step 1/1. Involved in the biosynthesis of pyridine alkaloid natural products, leading mainly to the production of anabasine, anatabine, nicotine and nornicotine, effective deterrents against herbivores with antiparasitic and pesticide properties (neurotoxins); nornicotine serves as the precursor in the synthesis of the carcinogen compound N'-nitrosonornicotine (NNN). Required for the biosynthesis of putrescine. Catalyzes the first step of polyamine (PA) biosynthesis to produce putrescine from arginine. The chain is Arginine decarboxylase 1A, chloroplastic from Nicotiana tabacum (Common tobacco).